Consider the following 97-residue polypeptide: Co-chaperonin GroES (97 aa).

The protein belongs to the GroES chaperonin family. Heptamer of 7 subunits arranged in a ring. Interacts with the chaperonin GroEL.

The protein localises to the cytoplasm. Functionally, together with the chaperonin GroEL, plays an essential role in assisting protein folding. The GroEL-GroES system forms a nano-cage that allows encapsulation of the non-native substrate proteins and provides a physical environment optimized to promote and accelerate protein folding. GroES binds to the apical surface of the GroEL ring, thereby capping the opening of the GroEL channel. The chain is Co-chaperonin GroES from Sodalis glossinidius (strain morsitans).